A 252-amino-acid polypeptide reads, in one-letter code: 5'-nucleotidase SurE (252 aa).

A divalent metal cation-binding residues include aspartate 8, aspartate 9, serine 40, and asparagine 93.

Belongs to the SurE nucleotidase family. It depends on a divalent metal cation as a cofactor.

It localises to the cytoplasm. It catalyses the reaction a ribonucleoside 5'-phosphate + H2O = a ribonucleoside + phosphate. Its function is as follows. Nucleotidase that shows phosphatase activity on nucleoside 5'-monophosphates. The polypeptide is 5'-nucleotidase SurE (Methylocella silvestris (strain DSM 15510 / CIP 108128 / LMG 27833 / NCIMB 13906 / BL2)).